Reading from the N-terminus, the 245-residue chain is MAAAAMHTSAEFINLKPNMWKKNPVRASGSCCLGSSSGDEISRKRKLPILLFDVMDTIVRDPFYQDVPAFFGMPMKQLLECKHPMVWIEFEKGLIDEEELARNFFIDGRDFDLEGLKECMRSGYSYLDGMQELLQTLAADDFEIHAFTNYPIWYNIIEDKLKLSAYLSWTFCSCIAGKRKPDPEFYLEVVGHLGVEPCDCIFIDDRPTNVKCAIEIGMGGLCFENADSLAKDLSDLGINVSVPKL.

The N-terminal 26 residues, 1 to 26, are a transit peptide targeting the chloroplast; that stretch reads MAAAAMHTSAEFINLKPNMWKKNPVR.

The protein belongs to the HAD-like hydrolase superfamily. DOG/GPP family. In terms of assembly, homodimer. Requires Mg(2+) as cofactor.

It localises to the plastid. The protein resides in the chloroplast stroma. The enzyme catalyses FMN + H2O = riboflavin + phosphate. The catalysed reaction is 5-amino-6-(5-phospho-D-ribitylamino)uracil + H2O = 5-amino-6-(D-ribitylamino)uracil + phosphate. Functionally, FMN hydrolase that catalyzes the dephosphorylation of flavin mononucleotide (FMN) to riboflavin. Can also dephosphorylate 5-amino-6-(5-phospho-D-ribitylamino)uracil, also known as ARPP. Not required for riboflavin biosynthesis in planta, but may help maintaining flavin homeostasis within chloroplasts. The protein is Flavin mononucleotide hydrolase 1, chloroplatic of Arabidopsis thaliana (Mouse-ear cress).